The sequence spans 390 residues: Centrosomal protein of 44 kDa (390 aa).

Residues 11–195 are binds with microtubules and centrioles; it reads RNLEQVLRLL…ISEDTLSPIT (185 aa). Residues 233–269 are a coiled coil; sequence EITALQTMLAECQENLKKLTSIEKRLDCLEQKMKGKV. Residues 322–348 are disordered; that stretch reads RKSEVERPASIPLSSGYSTASSDSTPR. Phosphoserine is present on residues Ser331 and Ser345. Low complexity predominate over residues 335–345; it reads SSGYSTASSDS. A Phosphothreonine modification is found at Thr346. The stretch at 361 to 385 forms a coiled coil; that stretch reads SEETTIQKMERMKKMFEETAELLKC.

As to quaternary structure, interacts with CROCC. Interacts with POC1B; the interaction is direct and recruits POC1B to centriolar microtubules. Binds to centriolar microtubules.

Its subcellular location is the cytoplasm. It is found in the cytoskeleton. The protein resides in the microtubule organizing center. It localises to the centrosome. The protein localises to the centriole. Its subcellular location is the spindle pole. It is found in the midbody. In terms of biological role, centriole-enriched microtubule-binding protein involved in centriole biogenesis. In collaboration with CEP295 and POC1B, is required for the centriole-to-centrosome conversion by ensuring the formation of bona fide centriole wall. Functions as a linker component that maintains centrosome cohesion. Associates with CROCC and regulates its stability and localization to the centrosome. The sequence is that of Centrosomal protein of 44 kDa (CEP44) from Homo sapiens (Human).